The sequence spans 263 residues: R-spondin-1 (263 aa).

The signal sequence occupies residues Met-1–Ser-20. 2 FU repeats span residues Ala-34–Asp-85 and Met-91–Ala-135. 11 cysteine pairs are disulfide-bonded: Cys-40–Cys-47, Cys-44–Cys-53, Cys-56–Cys-75, Cys-79–Cys-94, Cys-97–Cys-105, Cys-102–Cys-111, Cys-114–Cys-125, Cys-129–Cys-142, Cys-148–Cys-190, Cys-159–Cys-166, and Cys-199–Cys-206. A glycan (N-linked (GlcNAc...) asparagine) is linked at Asn-137. One can recognise a TSP type-1 domain in the interval Gln-147 to Pro-207. C-linked (Man) tryptophan glycans are attached at residues Trp-153 and Trp-156. The interval Cys-206–Ala-263 is disordered. The span at Gly-218 to Glu-234 shows a compositional bias: basic and acidic residues.

It belongs to the R-spondin family. In terms of assembly, interacts with the extracellular domain of FZD8 and LRP6. It however does not form a ternary complex with FZD8 and LRP6. Interacts with WNT1. Binds heparin. Interacts with ZNRF3; promoting indirect interaction between ZNRF3 and LGR4 and membrane clearance of ZNRF3. Interacts with LGR4, LGR5 and LGR6. Identified in a complex composed of RNF43, LGR5 and RSPO1. Interacts (via FU repeats) with KREM1. In terms of processing, C-, and N-glycosylated. N-glycosylation at Asn-137, negatively influences its secretion and enhancing effect on Wnt/beta-catenin signaling. C-mannosylation at Trp-156 by DPY19L3 is required for its secretion and regulates the enhancing activity of Wnt signaling. Abundantly expressed in adrenal glands, ovary, testis, thyroid and trachea but not in bone marrow, spinal cord, stomach, leukocytes colon, small intestine, prostate, thymus and spleen.

It is found in the secreted. Its subcellular location is the nucleus. Its function is as follows. Activator of the canonical Wnt signaling pathway by acting as a ligand for LGR4-6 receptors. Upon binding to LGR4-6 (LGR4, LGR5 or LGR6), LGR4-6 associate with phosphorylated LRP6 and frizzled receptors that are activated by extracellular Wnt receptors, triggering the canonical Wnt signaling pathway to increase expression of target genes. Also regulates the canonical Wnt/beta-catenin-dependent pathway and non-canonical Wnt signaling by acting as an inhibitor of ZNRF3, an important regulator of the Wnt signaling pathway. Acts as a ligand for frizzled FZD8 and LRP6. May negatively regulate the TGF-beta pathway. Has a essential roles in ovary determination. Regulates Wnt signaling by antagonizing DKK1/KREM1-mediated internalization of LRP6 through an interaction with KREM1. The polypeptide is R-spondin-1 (RSPO1) (Homo sapiens (Human)).